A 289-amino-acid chain; its full sequence is Rhodopsin (289 aa).

Topologically, residues 1–7 are extracellular; that stretch reads YLVSPAA. Residues 8–32 form a helical membrane-spanning segment; that stretch reads YAALGAYMFLLILIGFPVNFLTLYV. Over 33–44 the chain is Cytoplasmic; that stretch reads TLEHKKLRTPLN. Residues 45-67 form a helical membrane-spanning segment; it reads YILLNLAVADLFMVLGGFTTTMY. The Extracellular portion of the chain corresponds to 68–81; that stretch reads TSMHGYFVLGRLGC. A disulfide bridge links cysteine 81 with cysteine 158. A helical transmembrane segment spans residues 82–104; that stretch reads NLEGFFATLGGEIALWSLVVLAI. The 'Ionic lock' involved in activated form stabilization signature appears at 105–107; sequence ERW. Over 105-123 the chain is Cytoplasmic; the sequence is ERWIVVCKPISKFRFTEDN. The helical transmembrane segment at 124 to 144 threads the bilayer; that stretch reads AIMGLAFSWVMALACAVPPLV. Residues 145–173 lie on the Extracellular side of the membrane; the sequence is GWLRYIPEGMQCTCGVDYYTRAEGFDNES. An N-linked (GlcNAc...) asparagine glycan is attached at asparagine 171. Residues 174 to 195 traverse the membrane as a helical segment; that stretch reads FVIYMFIVHFLIPLSVIFFCYG. At 196 to 223 the chain is on the cytoplasmic side; that stretch reads RLLCAVKEAAAAQQESETTQRAEKEVSR. Residues 224–245 traverse the membrane as a helical segment; it reads MVVIMVIGFLVCWLPYASVAWW. Residues 246–257 lie on the Extracellular side of the membrane; that stretch reads IFCNQGSDFGPI. The helical transmembrane segment at 258-279 threads the bilayer; sequence FMTLPSFFAKRPAIYNPMIYIC. Position 267 is an N6-(retinylidene)lysine (lysine 267). Over 280-289 the chain is Cytoplasmic; the sequence is MNKQFRHCMI.

The protein belongs to the G-protein coupled receptor 1 family. Opsin subfamily. In terms of processing, phosphorylated on some or all of the serine and threonine residues present in the C-terminal region. Post-translationally, contains one covalently linked retinal chromophore.

It localises to the membrane. It is found in the cell projection. The protein resides in the cilium. Its subcellular location is the photoreceptor outer segment. Its function is as follows. Photoreceptor required for image-forming vision at low light intensity. While most salt water fish species use retinal as chromophore, most freshwater fish use 3-dehydroretinal, or a mixture of retinal and 3-dehydroretinal. Light-induced isomerization of 11-cis to all-trans retinal triggers a conformational change that activates signaling via G-proteins. Subsequent receptor phosphorylation mediates displacement of the bound G-protein alpha subunit by arrestin and terminates signaling. The chain is Rhodopsin (rho) from Batrachocottus nikolskii (Fat sculpin).